The sequence spans 862 residues: Valine--tRNA ligase (862 aa).

The 'HIGH' region motif lies at 43 to 53; sequence PTVSGALHVGH. A disordered region spans residues 459–494; the sequence is ERPILPDDAALPVDPSSDTPTGYHDSQRHQPGGFMA. The short motif at 574-578 is the 'KMSKS' region element; sequence KMSKS. Lys-577 is a binding site for ATP.

This sequence belongs to the class-I aminoacyl-tRNA synthetase family. ValS type 2 subfamily. Monomer.

It is found in the cytoplasm. It carries out the reaction tRNA(Val) + L-valine + ATP = L-valyl-tRNA(Val) + AMP + diphosphate. Functionally, catalyzes the attachment of valine to tRNA(Val). As ValRS can inadvertently accommodate and process structurally similar amino acids such as threonine, to avoid such errors, it has a 'posttransfer' editing activity that hydrolyzes mischarged Thr-tRNA(Val) in a tRNA-dependent manner. The chain is Valine--tRNA ligase from Salinispora arenicola (strain CNS-205).